Here is a 133-residue protein sequence, read N- to C-terminus: uncharacterized protein (133 aa).

This is an uncharacterized protein from Methanothermobacter marburgensis (strain ATCC BAA-927 / DSM 2133 / JCM 14651 / NBRC 100331 / OCM 82 / Marburg) (Methanobacterium thermoautotrophicum).